Reading from the N-terminus, the 566-residue chain is Membrane protein insertase YidC (566 aa).

The next 5 membrane-spanning stretches (helical) occupy residues 3-23 (IKRI…FNAW), 346-366 (GWLW…HAVV), 369-389 (WGWS…WFSA), 436-456 (GGCL…YVII), and 509-529 (MWIL…GLVL).

Belongs to the OXA1/ALB3/YidC family. Type 1 subfamily. In terms of assembly, interacts with the Sec translocase complex via SecD. Specifically interacts with transmembrane segments of nascent integral membrane proteins during membrane integration.

It is found in the cell inner membrane. Its function is as follows. Required for the insertion and/or proper folding and/or complex formation of integral membrane proteins into the membrane. Involved in integration of membrane proteins that insert both dependently and independently of the Sec translocase complex, as well as at least some lipoproteins. Aids folding of multispanning membrane proteins. In Coxiella burnetii (strain Dugway 5J108-111), this protein is Membrane protein insertase YidC.